The primary structure comprises 884 residues: Valine--tRNA ligase (884 aa).

The 'HIGH' region signature appears at 46–56 (PNVTGKLHLGH). The 'KMSKS' region signature appears at 520–524 (KMSKS). K523 contributes to the ATP binding site. Positions 809-844 (LADLLNVEEELARLEKELAKWQKELNMVGKKLSNER) form a coiled coil.

It belongs to the class-I aminoacyl-tRNA synthetase family. ValS type 1 subfamily. Monomer.

It localises to the cytoplasm. It catalyses the reaction tRNA(Val) + L-valine + ATP = L-valyl-tRNA(Val) + AMP + diphosphate. Catalyzes the attachment of valine to tRNA(Val). As ValRS can inadvertently accommodate and process structurally similar amino acids such as threonine, to avoid such errors, it has a 'posttransfer' editing activity that hydrolyzes mischarged Thr-tRNA(Val) in a tRNA-dependent manner. The polypeptide is Valine--tRNA ligase (Streptococcus agalactiae serotype III (strain NEM316)).